Consider the following 294-residue polypeptide: MPAYSSLARRGRRPAVVLLGGLVSASLALTLAPTAAAAPLAPPPGKDVGPGEAYMGVGTRIEQGLGAGPDERTIGPADTSGVQGIDVSHWQGSINWSSVKSAGMSFAYIKATEGTNYKDDRFSANYTNAYNAGIIRGAYHFARPNASSGTAQADYFASNGGGWSRDNRTLPGVLDIEHNPSGAMCYGLSTTQMRTWINDFHARYKARTTRDVVIYTTASWWNTCTGSWNGMAAKSPFWVAHWGVSAPTVPSGFPTWTFWQYSATGRVGGVSGDVDRNKFNGSAARLLALANNTA.

Residues 81–294 enclose the Ch-type lysozyme domain; that stretch reads GVQGIDVSHW…RLLALANNTA (214 aa). Residues Asp-86, Asp-175, and Glu-177 contribute to the active site. The cysteines at positions 185 and 224 are disulfide-linked.

Belongs to the glycosyl hydrolase 25 family.

Its subcellular location is the secreted. It catalyses the reaction Hydrolysis of (1-&gt;4)-beta-linkages between N-acetylmuramic acid and N-acetyl-D-glucosamine residues in a peptidoglycan and between N-acetyl-D-glucosamine residues in chitodextrins.. In terms of biological role, this enzyme has both lysozyme (acetylmuramidase) and diacetylmuramidase activities. The protein is Lysozyme M1 (acm) of Streptomyces globisporus.